We begin with the raw amino-acid sequence, 315 residues long: MNRAYGKMLGVGRALGGRVVTNRDLEAVLDTSDEWISTRTGIRERRFVAEGQSCVTLAVEAARRALEHAGVPGASVDLVVCATSTNPESMPSVACLVGEAVGAAGVGAMDLSAACAGFAYAASVAGAMLASGLASRVLLVGADEMTSIVNVRDRSTGILFGDGAGAVVLDRGDGSSGFVDHILGADGRMAPLGRAGHPGDGKRPLYQNGREIFRFAVRMFPEMVEKIMARNGISLDEVQYIIPHQANARIIQAAARKLEVPEEKLVVNVDRFGNTSAASIPLSYPDIFDGLEPGKYIITVGFGFGLTWAANLYRI.

Residues Cys-115 and His-244 contribute to the active site. An ACP-binding region spans residues 245–249; the sequence is QANAR. The active site involves Asn-274.

The protein belongs to the thiolase-like superfamily. FabH family. Homodimer.

It is found in the cytoplasm. It catalyses the reaction malonyl-[ACP] + acetyl-CoA + H(+) = 3-oxobutanoyl-[ACP] + CO2 + CoA. Its pathway is lipid metabolism; fatty acid biosynthesis. Functionally, catalyzes the condensation reaction of fatty acid synthesis by the addition to an acyl acceptor of two carbons from malonyl-ACP. Catalyzes the first condensation reaction which initiates fatty acid synthesis and may therefore play a role in governing the total rate of fatty acid production. Possesses both acetoacetyl-ACP synthase and acetyl transacylase activities. Its substrate specificity determines the biosynthesis of branched-chain and/or straight-chain of fatty acids. In Rubrobacter xylanophilus (strain DSM 9941 / JCM 11954 / NBRC 16129 / PRD-1), this protein is Beta-ketoacyl-[acyl-carrier-protein] synthase III.